The sequence spans 350 residues: UDP-3-O-acylglucosamine N-acyltransferase (350 aa).

Histidine 251 acts as the Proton acceptor in catalysis.

It belongs to the transferase hexapeptide repeat family. LpxD subfamily. Homotrimer.

It carries out the reaction a UDP-3-O-[(3R)-3-hydroxyacyl]-alpha-D-glucosamine + a (3R)-hydroxyacyl-[ACP] = a UDP-2-N,3-O-bis[(3R)-3-hydroxyacyl]-alpha-D-glucosamine + holo-[ACP] + H(+). The protein operates within bacterial outer membrane biogenesis; LPS lipid A biosynthesis. In terms of biological role, catalyzes the N-acylation of UDP-3-O-acylglucosamine using 3-hydroxyacyl-ACP as the acyl donor. Is involved in the biosynthesis of lipid A, a phosphorylated glycolipid that anchors the lipopolysaccharide to the outer membrane of the cell. This is UDP-3-O-acylglucosamine N-acyltransferase from Prochlorococcus marinus (strain NATL2A).